The chain runs to 733 residues: MENLASLLKSHKLSQADYEHIVQILGREPNLVELGVFSAMWSEHCSYKSSKKYLRGFPTEAAWVIQGPGENAGVIDIGEGYAAVFKMESHNHPSFIEPYQGAATGVGGIMRDVFTMGARPVASLNAIRFGDIRRQDEIGKKHRYLLKGVVAGIGGYGNCMGVPTVGGEMSFEDCYNGNILVNAFTLGIAKSDEIFYGRAEGIGNPVIYVGSKTGRDGLGGAVMSSDSFDDAANQLRPTVQVGDPFAEKLLLEACLELFKTNYIVGIQDMGAAGLTSSSFEMAGRSGSGMIMHLDRVPMREQGMTPYELMLSESQERMLICAKKGYEEKVLEIFRKWELDAEVIGEVTSSGKMELFWHGEKCAEIPVLPVSEEAPMLDRPTKEPAYLAEIRSKGAQAPKEIDLKEAFMKLWSAPETMDKSWVYSQYDSMVQTNTIVGPGGGDGSLVRVKENGAALAMSADCNPRYCYLNPREGAKLAVAESGRNVAVRGARPLAITDCLNFGSPENPEVMWQFAEACEGIKEACKVLLTPVVSGNVSLYNQTNGVDIFPTPSIATVGLLPKAQKALLGAFKKEGNLLLLVGETKSEFGGSLYQKEVEGFLGGDAPVIDLHRELALWRFLEEANEAGFLESAKDVNVGGLAIALGKMSVLGQKGCKVKTALKGVDLFSESPSRAVLEVSSEHLAALESLAQKGGVALGVIGSVGGENLEIDSLSLPLQTLQEIYLRGFAKIVENL.

His44 is an active-site residue. Residues Tyr47 and Lys86 each coordinate ATP. Residue Glu88 participates in Mg(2+) binding. Residues 89-92 (SHNH) and Arg111 contribute to the substrate site. His90 serves as the catalytic Proton acceptor. Asp112 serves as a coordination point for Mg(2+). Gln240 lines the substrate pocket. Asp268 serves as a coordination point for Mg(2+). 312–314 (ESQ) provides a ligand contact to substrate. Asp496 and Gly533 together coordinate ATP. Mg(2+) is bound at residue Asn534. Residue Ser536 coordinates substrate.

This sequence belongs to the FGAMS family. As to quaternary structure, monomer. Part of the FGAM synthase complex composed of 1 PurL, 1 PurQ and 2 PurS subunits.

The protein resides in the cytoplasm. The enzyme catalyses N(2)-formyl-N(1)-(5-phospho-beta-D-ribosyl)glycinamide + L-glutamine + ATP + H2O = 2-formamido-N(1)-(5-O-phospho-beta-D-ribosyl)acetamidine + L-glutamate + ADP + phosphate + H(+). It participates in purine metabolism; IMP biosynthesis via de novo pathway; 5-amino-1-(5-phospho-D-ribosyl)imidazole from N(2)-formyl-N(1)-(5-phospho-D-ribosyl)glycinamide: step 1/2. Part of the phosphoribosylformylglycinamidine synthase complex involved in the purines biosynthetic pathway. Catalyzes the ATP-dependent conversion of formylglycinamide ribonucleotide (FGAR) and glutamine to yield formylglycinamidine ribonucleotide (FGAM) and glutamate. The FGAM synthase complex is composed of three subunits. PurQ produces an ammonia molecule by converting glutamine to glutamate. PurL transfers the ammonia molecule to FGAR to form FGAM in an ATP-dependent manner. PurS interacts with PurQ and PurL and is thought to assist in the transfer of the ammonia molecule from PurQ to PurL. In Wolinella succinogenes (strain ATCC 29543 / DSM 1740 / CCUG 13145 / JCM 31913 / LMG 7466 / NCTC 11488 / FDC 602W) (Vibrio succinogenes), this protein is Phosphoribosylformylglycinamidine synthase subunit PurL.